The chain runs to 396 residues: Phosphoglycerate kinase (396 aa).

Substrate is bound by residues Asp-21–Asn-23, Arg-36, His-59–Lys-62, Arg-119, and Arg-156. ATP contacts are provided by residues Lys-206, Gly-294, Glu-325, and Gly-352–Ser-355.

The protein belongs to the phosphoglycerate kinase family. In terms of assembly, monomer.

It localises to the cytoplasm. The enzyme catalyses (2R)-3-phosphoglycerate + ATP = (2R)-3-phospho-glyceroyl phosphate + ADP. The protein operates within carbohydrate degradation; glycolysis; pyruvate from D-glyceraldehyde 3-phosphate: step 2/5. The sequence is that of Phosphoglycerate kinase from Listeria innocua serovar 6a (strain ATCC BAA-680 / CLIP 11262).